A 207-amino-acid polypeptide reads, in one-letter code: Dephospho-CoA kinase (207 aa).

The 200-residue stretch at 4–203 folds into the DPCK domain; the sequence is VIGLTGGIAS…EEGYIEKPNY (200 aa). Residue 12-17 coordinates ATP; it reads ASGKST.

It belongs to the CoaE family.

Its subcellular location is the cytoplasm. It catalyses the reaction 3'-dephospho-CoA + ATP = ADP + CoA + H(+). Its pathway is cofactor biosynthesis; coenzyme A biosynthesis; CoA from (R)-pantothenate: step 5/5. Its function is as follows. Catalyzes the phosphorylation of the 3'-hydroxyl group of dephosphocoenzyme A to form coenzyme A. This Staphylococcus aureus (strain USA300) protein is Dephospho-CoA kinase.